The following is a 275-amino-acid chain: COP9 signalosome complex subunit 7a (275 aa).

At Ser-2 the chain carries N-acetylserine. The PCI domain occupies 2–159 (SAEVKVTGQN…QRLEVDYSIG (158 aa)). Positions 185-233 (LSGIEEQVSRANQHKEQQLGLKQQIESEVANLKKTIKVTTAAAAAATSQ) form a coiled coil. The disordered stretch occupies residues 227–275 (AAAATSQDPEQHLTELREPAPGTNQRQPSKKASKGKGLRGSAKIWSKSN). Basic and acidic residues predominate over residues 235–244 (PEQHLTELRE). Residues 254-263 (PSKKASKGKG) show a composition bias toward basic residues.

The protein belongs to the CSN7/EIF3M family. CSN7 subfamily. As to quaternary structure, component of the CSN complex, composed of COPS1/GPS1, COPS2, COPS3, COPS4, COPS5, COPS6, COPS7 (COPS7A or COPS7B), COPS8 and COPS9. In the complex, it probably interacts directly with COPS1, COPS2, COPS4, COPS5, COPS6 and COPS8. Interacts with PMF1. Interacts with the translation initiation factor EIF3S6. Interacts with CK2 and PKD. Interacts directly with ID3. Post-translationally, phosphorylated by CK2 and PKD kinases.

It localises to the cytoplasm. The protein resides in the nucleus. Functionally, component of the COP9 signalosome complex (CSN), a complex involved in various cellular and developmental processes. The CSN complex is an essential regulator of the ubiquitin (Ubl) conjugation pathway by mediating the deneddylation of the cullin subunits of SCF-type E3 ligase complexes, leading to decrease the Ubl ligase activity of SCF-type complexes such as SCF, CSA or DDB2. The complex is also involved in phosphorylation of p53/TP53, JUN, I-kappa-B-alpha/NFKBIA, ITPK1 and IRF8/ICSBP, possibly via its association with CK2 and PKD kinases. CSN-dependent phosphorylation of TP53 and JUN promotes and protects degradation by the Ubl system, respectively. The sequence is that of COP9 signalosome complex subunit 7a (COPS7A) from Pongo abelii (Sumatran orangutan).